The following is an 825-amino-acid chain: Leucine-rich repeat and guanylate kinase domain-containing protein (825 aa).

Residues 73-96 form a disordered region; it reads DSDGDEDQGEGEAGSEESSESEML. LRR repeat units lie at residues 129–149, 150–171, 172–193, 194–215, 216–237, 238–259, 260–280, 281–302, and 303–324; these read YLNL…CGYV, HLQK…SCMP, YLLE…KPPK, NLKK…SAYH, ALTK…EMCN, NLIH…NKLP, IKIL…EDLK, ALQN…ENHD, and LLEV…EYIK. One can recognise an LRRCT domain in the interval 337 to 375; the sequence is NPIQEKSEYWFFVIFMLLRLTELDQKKIKVEEKVSAVNK. The Guanylate kinase-like domain occupies 414–597; the sequence is YPMLILAGPE…AYQKLSQLIR (184 aa). Residue 421-428 coordinates ATP; sequence GPEACGKR. The segment at 760–825 is disordered; sequence PEGSISSHLG…TLPPIPQGRR (66 aa). Positions 763 to 774 are enriched in polar residues; the sequence is SISSHLGSGASD. Positions 816 to 825 are enriched in pro residues; that stretch reads TLPPIPQGRR.

As to quaternary structure, interacts (via guanylate kinase-like domain) with RIMBP3 (via coiled-coil region). Interacts (via guanylate kinase-like domain) with HOOK2. Interacts (via LRRCT domain) with KLC3. Interacts with HOOK1 and HOOK3.

The protein localises to the cytoplasmic vesicle. It is found in the secretory vesicle. The protein resides in the acrosome. It localises to the cytoplasm. Its subcellular location is the cytoskeleton. The protein localises to the cilium basal body. In terms of biological role, involved in multiple aspects of sperm assembly including acrosome attachment, shaping of the sperm head and in the early aspects of axoneme development. Not essential for primary cilium biogenesis. The protein is Leucine-rich repeat and guanylate kinase domain-containing protein (LRGUK) of Homo sapiens (Human).